The following is a 164-amino-acid chain: Peptide deformylase-like (164 aa).

Residue Glu134 is part of the active site.

The protein belongs to the polypeptide deformylase family.

The protein is Peptide deformylase-like of Brucella melitensis biotype 1 (strain ATCC 23456 / CCUG 17765 / NCTC 10094 / 16M).